The chain runs to 622 residues: ABC transporter permease protein YxdM (622 aa).

10 consecutive transmembrane segments (helical) span residues 20–40, 56–76, 118–138, 154–174, 195–215, 219–239, 279–299, 498–518, 558–578, and 590–610; these read AFFL…MFLF, GLTA…LYSV, AGII…AYIL, ITAC…ILFV, PSVL…GMVL, VHGA…YFFF, LFFI…VLAM, TVQL…VFFV, IQLA…TLFA, and VAGP…LFFL.

Belongs to the ABC-4 integral membrane protein family. As to quaternary structure, the complex is composed of two ATP-binding proteins (YxdL) and two transmembrane proteins (YxdM).

The protein resides in the cell membrane. Its function is as follows. Part of the ABC transporter complex YxdLM which could be involved in peptide resistance. The chain is ABC transporter permease protein YxdM (yxdM) from Bacillus subtilis (strain 168).